We begin with the raw amino-acid sequence, 444 residues long: Sprouty-related, EVH1 domain-containing protein 1 (444 aa).

Serine 2 bears the N-acetylserine mark. The 118-residue stretch at 6–123 (ATSDNDNSYA…RGIRRAIEDI (118 aa)) folds into the WH1 domain. The residue at position 225 (lysine 225) is an N6-methyllysine. Residues 234–286 (SIRHVSFQDEDEIVRINPRDILIRRYADYRHPDMWKNDLERDDTDSSVPFSKQ) form the KBD domain. Position 239 is a phosphoserine (serine 239). The disordered stretch occupies residues 268–287 (WKNDLERDDTDSSVPFSKQD). Residue serine 309 is modified to Phosphoserine. Positions 333-444 (SRCVYCQERF…CCGGKHKAAG (112 aa)) are required for interaction with TESK1. One can recognise an SPR domain in the interval 334 to 442 (RCVYCQERFN…CGCCGGKHKA (109 aa)).

As to quaternary structure, homodimer and heterodimer. Able to interact with SPRED2 to form heterodimers. Interacts (via C-terminus) with TAOK1/MARKK (via C-terminus); the interaction does not affect TAOK1 kinase activity. Interacts (via C-terminus) with TESK1 (via C-terminus); the interaction inhibits TESK1 kinase activity. Interacts with CAV1. Interacts with RAS. Interacts with palmitoyltransferase ZDHHC17/HIP14; the interaction leads to palmitoylation of SPRED1. Post-translationally, palmitoylated by ZDHHC17/HIP14. In terms of processing, ubiquitinated. Phosphorylated on tyrosine. In terms of tissue distribution, expressed in brain. Weakly expressed in lung, heart, liver, kidney, intestine, spleen, testis, thymus, colon and ovary. Also expressed in embryonic tissues such as heart, lung, liver and brain. Highly expressed in IL3-dependent hematopoietic cell lines (Ba/F3 and MC/9) and bone marrow-derived mast cells (BMMC).

It localises to the cell membrane. Its subcellular location is the membrane. The protein resides in the caveola. It is found in the nucleus. Its function is as follows. Tyrosine kinase substrate that inhibits growth-factor-mediated activation of MAP kinase. Negatively regulates hematopoiesis of bone marrow. Inhibits fibroblast growth factor (FGF)-induced retinal lens fiber differentiation, probably by inhibiting FGF-mediated phosphorylation of ERK1/2. Attenuates actin stress fiber formation via inhibition of TESK1-mediated phosphorylation of cofilin. Inhibits TGFB-induced epithelial-to-mesenchymal transition in lens epithelial cells. This Mus musculus (Mouse) protein is Sprouty-related, EVH1 domain-containing protein 1 (Spred1).